The chain runs to 207 residues: Large ribosomal subunit protein uL4 (207 aa).

The segment at 48 to 86 (THKVKNRSEVRGGGRKPWRQKGTGRARQGSIRSPQWRGG) is disordered. Basic residues predominate over residues 60–71 (GGRKPWRQKGTG).

It belongs to the universal ribosomal protein uL4 family. As to quaternary structure, part of the 50S ribosomal subunit.

Functionally, one of the primary rRNA binding proteins, this protein initially binds near the 5'-end of the 23S rRNA. It is important during the early stages of 50S assembly. It makes multiple contacts with different domains of the 23S rRNA in the assembled 50S subunit and ribosome. Its function is as follows. Forms part of the polypeptide exit tunnel. The chain is Large ribosomal subunit protein uL4 from Bacillus licheniformis (strain ATCC 14580 / DSM 13 / JCM 2505 / CCUG 7422 / NBRC 12200 / NCIMB 9375 / NCTC 10341 / NRRL NRS-1264 / Gibson 46).